The primary structure comprises 861 residues: Methyltransferase/ribosomally synthesized type III borosin cyclic peptide precursor aboMAa (861 aa).

The tract at residues 1-279 (MSSPAVETKV…AISTFYLPPK (279 aa)) is methyltransferase domain. Catalysis depends on residues arginine 100, tyrosine 104, and tyrosine 126. S-adenosyl-L-methionine contacts are provided by tyrosine 126, histidine 128, valine 131, alanine 158, glutamine 200, alanine 241, serine 272, and threonine 273. The tract at residues 280–408 (ALSPLHEESA…GLVRSVMKTS (129 aa)) is clasp domain. The type III-specific C-terminal domain stretch occupies residues 409–799 (PEDVAKQFVQ…PPDLEELPIP (391 aa)). Disordered stretches follow at residues 575 to 596 (NGAF…SSQG) and 772 to 801 (EAAE…IPDA). The span at 579–593 (PSGGGGGSGGGGGSS) shows a compositional bias: gly residues. The span at 772 to 783 (EAAEKDSAVDDE) shows a compositional bias: basic and acidic residues. The span at 784 to 797 (KFADEEPPDLEELP) shows a compositional bias: acidic residues. N-methylvaline occurs at positions 805 and 807. 9 consecutive repeat copies span residues 805 to 809 (VDVTD), 810 to 814 (VDVTD), 815 to 819 (VDVTD), 820 to 824 (VDVTD), 825 to 829 (VDVTD), 830 to 834 (VDVTD), 835 to 839 (VDVTD), 840 to 844 (VDVTD), and 845 to 849 (VDVTD). Residues 805-854 (VDVTDVDVTDVDVTDVDVTDVDVTDVDVTDVDVTDVDVTDVDVTDVDVVD) form a 10 X 5 AA tandem repeats of VDVTD region. Position 808 is an N-methylthreonine (threonine 808). N-methylvaline is present on residues valine 810 and valine 812. Position 813 is an N-methylthreonine (threonine 813). Valine 815 and valine 817 each carry N-methylvaline. At threonine 818 the chain carries N-methylthreonine. N-methylvaline is present on residues valine 820 and valine 822. Threonine 823 carries the N-methylthreonine modification. Valine 825 and valine 827 each carry N-methylvaline. Threonine 828 is modified (N-methylthreonine). 2 positions are modified to N-methylvaline: valine 830 and valine 832. An N-methylthreonine modification is found at threonine 833. A 10; approximate repeat occupies 850-854 (VDVVD).

This sequence in the N-terminal section; belongs to the precorrin methyltransferase family. AboMA automethylates at Val-805, Val-807, Thr-808, Val-810, Val-812, Thr-813, Val-815, Val-817, Thr-818, Val-820, Val-822, Thr-823, Val-825, Val-827 and Thr-828, Val-830, Val-832 and T-833 before being processed by a prolyloligopeptidase which likely forms a peptidyl ester upon removal of the follower propeptide, which then undergoes macrocyclization with the N-terminus of the modified core peptide. Peptide backbone alpha-N-methylations change the physicochemical properties of amide bonds to provide structural constraints and other favorable characteristics including biological membrane permeability to peptides.

It functions in the pathway secondary metabolite biosynthesis. Functionally, fusion protein of the methyltransferase aboM and a type III borosin core peptide; part of the gene cluster that mediates the biosynthesis of a type III borosin, a highly methylated cyclic peptide with potent biological activities. Type III borosins derive from the C-terminus of the fusion protein, and it is the same protein that methylates its own C-terminus using S-adenosyl methionine (SAM). The C-terminus is subsequently cleaved off and macrocyclized by a prolyloligopeptidase to give the final product. This is Methyltransferase/ribosomally synthesized type III borosin cyclic peptide precursor aboMAa from Anomoporia bombycina (Polyporus bombycinus).